The primary structure comprises 247 residues: MIGITQAEGVMTIELQRPERRNALNSQLIEKLREAVQKASSADSEVSTRVIVLTGQGTVFCAGADLSGDAFAADYPDRLIELHRVMDAVPMPVIGAINGPAIGAGLQLAMQCDLRVVAPDAYFQFPTSKYGLALDNWSIRRLSSLVGHGRARAMLLTAEKLTADIALQTGMANRIGALADAQAWAAEVTGLAPLAIQHAKRVLNDDGSIEEAWPEHKKLFDKAWTSQDVIEAQVARVEKRPPKFQGA.

Belongs to the enoyl-CoA hydratase/isomerase family.

It catalyses the reaction a (3S)-3-hydroxyacyl-CoA = a (2E)-enoyl-CoA + H2O. It carries out the reaction a 4-saturated-(3S)-3-hydroxyacyl-CoA = a (3E)-enoyl-CoA + H2O. Functionally, could possibly oxidize fatty acids using specific components. The polypeptide is Probable enoyl-CoA hydratase echA6 (echA6) (Mycobacterium leprae (strain TN)).